The following is a 294-amino-acid chain: Protoheme IX farnesyltransferase (294 aa).

9 helical membrane-spanning segments follow: residues 24–44, 48–68, 96–116, 118–138, 145–165, 172–192, 224–244, 245–265, and 268–288; these read VVLLMLLTVIVGMYLAAPGWV, LIAFTLLGIGLCAGSAAAINH, ALWFAVIIGLMGLSLLILFVN, LTALLTFVTLIGYAGVYTGYL, NIVIGGLAGAAPPLLGWTAVT, ALLLVLIIFTWTPPHFWALAI, VLLLVVSLLPFVVSMSGWIYL, LGALVLGIRFLVWAHKLYFTD, and VVAMQTFRFSILYLMLLFVFL.

The protein belongs to the UbiA prenyltransferase family. Protoheme IX farnesyltransferase subfamily.

It is found in the cell inner membrane. It catalyses the reaction heme b + (2E,6E)-farnesyl diphosphate + H2O = Fe(II)-heme o + diphosphate. The protein operates within porphyrin-containing compound metabolism; heme O biosynthesis; heme O from protoheme: step 1/1. Its function is as follows. Converts heme B (protoheme IX) to heme O by substitution of the vinyl group on carbon 2 of heme B porphyrin ring with a hydroxyethyl farnesyl side group. In Legionella pneumophila (strain Corby), this protein is Protoheme IX farnesyltransferase.